Here is a 333-residue protein sequence, read N- to C-terminus: Fructose-1,6-bisphosphatase class 1 (333 aa).

Mg(2+) is bound by residues E92, D113, L115, and D116. Substrate contacts are provided by residues 116–119 (DGSS), N209, Y242, and K272. E278 contributes to the Mg(2+) binding site.

Belongs to the FBPase class 1 family. In terms of assembly, homotetramer. Mg(2+) is required as a cofactor.

The protein resides in the cytoplasm. It carries out the reaction beta-D-fructose 1,6-bisphosphate + H2O = beta-D-fructose 6-phosphate + phosphate. Its pathway is carbohydrate biosynthesis; Calvin cycle. The chain is Fructose-1,6-bisphosphatase class 1 from Chlorobium luteolum (strain DSM 273 / BCRC 81028 / 2530) (Pelodictyon luteolum).